Here is a 299-residue protein sequence, read N- to C-terminus: Lipoyl synthase (299 aa).

Residues Cys45, Cys50, Cys56, Cys71, Cys75, Cys78, and Ser284 each contribute to the [4Fe-4S] cluster site. A Radical SAM core domain is found at 57–273 (YSKGTATFMI…GDVALAKDFL (217 aa)).

Belongs to the radical SAM superfamily. Lipoyl synthase family. [4Fe-4S] cluster serves as cofactor.

It is found in the cytoplasm. It carries out the reaction [[Fe-S] cluster scaffold protein carrying a second [4Fe-4S](2+) cluster] + N(6)-octanoyl-L-lysyl-[protein] + 2 oxidized [2Fe-2S]-[ferredoxin] + 2 S-adenosyl-L-methionine + 4 H(+) = [[Fe-S] cluster scaffold protein] + N(6)-[(R)-dihydrolipoyl]-L-lysyl-[protein] + 4 Fe(3+) + 2 hydrogen sulfide + 2 5'-deoxyadenosine + 2 L-methionine + 2 reduced [2Fe-2S]-[ferredoxin]. It participates in protein modification; protein lipoylation via endogenous pathway; protein N(6)-(lipoyl)lysine from octanoyl-[acyl-carrier-protein]: step 2/2. Catalyzes the radical-mediated insertion of two sulfur atoms into the C-6 and C-8 positions of the octanoyl moiety bound to the lipoyl domains of lipoate-dependent enzymes, thereby converting the octanoylated domains into lipoylated derivatives. The polypeptide is Lipoyl synthase (Desulfotalea psychrophila (strain LSv54 / DSM 12343)).